We begin with the raw amino-acid sequence, 170 residues long: NADH-quinone oxidoreductase subunit B (170 aa).

4 residues coordinate [4Fe-4S] cluster: Cys37, Cys38, Cys102, and Cys131.

Belongs to the complex I 20 kDa subunit family. As to quaternary structure, NDH-1 is composed of 14 different subunits. Subunits NuoB, C, D, E, F, and G constitute the peripheral sector of the complex. It depends on [4Fe-4S] cluster as a cofactor.

Its subcellular location is the cell inner membrane. It carries out the reaction a quinone + NADH + 5 H(+)(in) = a quinol + NAD(+) + 4 H(+)(out). NDH-1 shuttles electrons from NADH, via FMN and iron-sulfur (Fe-S) centers, to quinones in the respiratory chain. The immediate electron acceptor for the enzyme in this species is believed to be ubiquinone. Couples the redox reaction to proton translocation (for every two electrons transferred, four hydrogen ions are translocated across the cytoplasmic membrane), and thus conserves the redox energy in a proton gradient. This Geobacter sp. (strain M21) protein is NADH-quinone oxidoreductase subunit B.